A 321-amino-acid polypeptide reads, in one-letter code: Malate dehydrogenase (321 aa).

NAD(+)-binding positions include 10–15 (GGGQIG) and D34. R83 and R89 together coordinate substrate. Residues N96 and 119–121 (ISN) each bind NAD(+). Substrate contacts are provided by N121 and R152. Catalysis depends on H176, which acts as the Proton acceptor.

Belongs to the LDH/MDH superfamily. MDH type 3 family.

The catalysed reaction is (S)-malate + NAD(+) = oxaloacetate + NADH + H(+). Its function is as follows. Catalyzes the reversible oxidation of malate to oxaloacetate. The sequence is that of Malate dehydrogenase from Trichlorobacter lovleyi (strain ATCC BAA-1151 / DSM 17278 / SZ) (Geobacter lovleyi).